The sequence spans 715 residues: Protein sneaky (715 aa).

At 1–32 (MLSLLTRPFLPIFCFLYGPQSEGSTRIQCLRR) the chain is on the cytoplasmic side. Residues 33 to 53 (FVTFLLGLVLGFLLWKLAALN) form a helical membrane-spanning segment. Topologically, residues 54-66 (FTLGRLFVNGATD) are extracellular. Residues 67-87 (LYVFIIFVLVTGTIFMLSLPV) traverse the membrane as a helical segment. Residues 88 to 109 (RAVILLIFVALVGKSGRTYLRA) lie on the Cytoplasmic side of the membrane. Residues 110–130 (VAFAFIISGPIANLVENAGEV) form a helical membrane-spanning segment. The Extracellular portion of the chain corresponds to 131 to 373 (ARVFVCTTVL…FERQKRIFNK (243 aa)). Residues 374 to 394 (VMGILQKILCLFMLRMVYVSI) traverse the membrane as a helical segment. Over 395–457 (NYYVKYLNDV…FSRTHHESTT (63 aa)) the chain is Cytoplasmic. Residues 458–478 (VCFNLLQFLLELVTAGLFILI) traverse the membrane as a helical segment. Topologically, residues 479 to 553 (DHLVVELLQI…NAHVLPKKMY (75 aa)) are extracellular. A helical transmembrane segment spans residues 554–574 (YQLILLYLIIIVLIYQSTTFL). The Cytoplasmic segment spans residues 575-715 (RMRRVICSFF…VEVYTYRKEK (141 aa)). The RING-type; degenerate zinc finger occupies 655–691 (CMICRGLEDSTFTVCGNCGLPYCDDCAEDLNSVCFQC).

In terms of tissue distribution, specifically expressed in testis.

The protein resides in the cytoplasmic vesicle. Its subcellular location is the secretory vesicle. It is found in the acrosome membrane. The protein localises to the cytoplasm. It localises to the cytoplasmic vesicle membrane. Functionally, component of the sperm acrosome membrane. Required for breakdown of the sperm plasma membrane after sperm entry into the egg, which is an essential prerequisite for successful fertilization. The protein is Protein sneaky of Drosophila melanogaster (Fruit fly).